The sequence spans 286 residues: ATP synthase gamma chain (286 aa).

Belongs to the ATPase gamma chain family. As to quaternary structure, F-type ATPases have 2 components, CF(1) - the catalytic core - and CF(0) - the membrane proton channel. CF(1) has five subunits: alpha(3), beta(3), gamma(1), delta(1), epsilon(1). CF(0) has three main subunits: a, b and c.

It is found in the cell inner membrane. Functionally, produces ATP from ADP in the presence of a proton gradient across the membrane. The gamma chain is believed to be important in regulating ATPase activity and the flow of protons through the CF(0) complex. In Fuscovulum blasticum (Rhodobacter blasticus), this protein is ATP synthase gamma chain.